Consider the following 98-residue polypeptide: Co-chaperonin GroES (98 aa).

Belongs to the GroES chaperonin family. In terms of assembly, heptamer of 7 subunits arranged in a ring. Interacts with the chaperonin GroEL.

Its subcellular location is the cytoplasm. In terms of biological role, together with the chaperonin GroEL, plays an essential role in assisting protein folding. The GroEL-GroES system forms a nano-cage that allows encapsulation of the non-native substrate proteins and provides a physical environment optimized to promote and accelerate protein folding. GroES binds to the apical surface of the GroEL ring, thereby capping the opening of the GroEL channel. This is Co-chaperonin GroES from Corynebacterium diphtheriae (strain ATCC 700971 / NCTC 13129 / Biotype gravis).